Reading from the N-terminus, the 447-residue chain is Dual specificity protein phosphatase CDC14C (447 aa).

Residues 14–168 (PQDDVYVDIT…AMQYGFLNFN (155 aa)) form an a region. The segment at 169–182 (SFNLDEYEHYEKAE) is linker. Residues 183-349 (NGDLNWIIPD…EGDYFRQRLK (167 aa)) form a b region. Residues 184-344 (GDLNWIIPDR…TSLWLEGDYF (161 aa)) form the Tyrosine-protein phosphatase domain. Catalysis depends on C284, which acts as the Phosphocysteine intermediate. Residues 426–446 (FTLCSVVIWWIVCDYILPILL) form a helical membrane-spanning segment.

This sequence belongs to the protein-tyrosine phosphatase family. Non-receptor class CDC14 subfamily.

Its subcellular location is the endoplasmic reticulum membrane. It carries out the reaction O-phospho-L-tyrosyl-[protein] + H2O = L-tyrosyl-[protein] + phosphate. The catalysed reaction is O-phospho-L-seryl-[protein] + H2O = L-seryl-[protein] + phosphate. It catalyses the reaction O-phospho-L-threonyl-[protein] + H2O = L-threonyl-[protein] + phosphate. Functionally, dual-specificity phosphatase. Preferentially dephosphorylates proteins modified by proline-directed kinases. This Homo sapiens (Human) protein is Dual specificity protein phosphatase CDC14C.